A 285-amino-acid chain; its full sequence is Probable endonuclease 4 (285 aa).

Zn(2+) contacts are provided by histidine 69, histidine 109, glutamate 145, aspartate 179, histidine 182, histidine 216, aspartate 229, histidine 231, and glutamate 261.

Belongs to the AP endonuclease 2 family. Zn(2+) is required as a cofactor.

The enzyme catalyses Endonucleolytic cleavage to 5'-phosphooligonucleotide end-products.. In terms of biological role, endonuclease IV plays a role in DNA repair. It cleaves phosphodiester bonds at apurinic or apyrimidinic (AP) sites, generating a 3'-hydroxyl group and a 5'-terminal sugar phosphate. This is Probable endonuclease 4 from Shigella flexneri serotype 5b (strain 8401).